The sequence spans 537 residues: Synaptotagmin-2 (537 aa).

Residues 1–2 (MG) lie on the Cytoplasmic side of the membrane. Residues 3 to 23 (IISTILGVIGFGFGTTIGIVI) traverse the membrane as a helical segment. The Lumenal segment spans residues 24–537 (GYYLFIYFQS…QIELQWRNSS (514 aa)). One can recognise an SMP-LTD domain in the interval 67-249 (DFDRIDWLNK…WPKTLNVQIM (183 aa)). The tract at residues 227 to 505 (QEIIKDQVAN…TLGYVVINLG (279 aa)) is phospholipid binding. C2 domains follow at residues 240-362 (WPKT…LMTL) and 402-517 (DPNA…NDKY). 4 residues coordinate Ca(2+): Asp276, Asp282, Asp332, and Glu334.

It belongs to the synaptotagmin family. It depends on Ca(2+) as a cofactor.

The protein resides in the golgi apparatus membrane. May play an important role in regulating an unconventional protein trafficking from the cytosol to the extracellular matrix. This chain is Synaptotagmin-2 (SYT2), found in Arabidopsis thaliana (Mouse-ear cress).